We begin with the raw amino-acid sequence, 429 residues long: 3-phosphoshikimate 1-carboxyvinyltransferase (429 aa).

Residues lysine 20, serine 21, and arginine 25 each coordinate 3-phosphoshikimate. Lysine 20 is a phosphoenolpyruvate binding site. Phosphoenolpyruvate contacts are provided by glycine 89 and arginine 118. Serine 164, serine 165, glutamine 166, serine 192, aspartate 311, and lysine 338 together coordinate 3-phosphoshikimate. Glutamine 166 provides a ligand contact to phosphoenolpyruvate. Aspartate 311 functions as the Proton acceptor in the catalytic mechanism. 2 residues coordinate phosphoenolpyruvate: arginine 342 and arginine 384.

This sequence belongs to the EPSP synthase family. In terms of assembly, monomer.

The protein localises to the cytoplasm. It catalyses the reaction 3-phosphoshikimate + phosphoenolpyruvate = 5-O-(1-carboxyvinyl)-3-phosphoshikimate + phosphate. It participates in metabolic intermediate biosynthesis; chorismate biosynthesis. In terms of biological role, catalyzes the transfer of the enolpyruvyl moiety of phosphoenolpyruvate (PEP) to the 5-hydroxyl of shikimate-3-phosphate (S3P) to produce enolpyruvyl shikimate-3-phosphate and inorganic phosphate. The polypeptide is 3-phosphoshikimate 1-carboxyvinyltransferase (Methanococcus maripaludis (strain C5 / ATCC BAA-1333)).